The following is a 322-amino-acid chain: Adenine deaminase (322 aa).

His11, His13, and His189 together coordinate Zn(2+). Residue Glu192 is the Proton donor of the active site. Asp270 is a Zn(2+) binding site. Substrate is bound at residue Asp271.

This sequence belongs to the metallo-dependent hydrolases superfamily. Adenosine and AMP deaminases family. Adenine deaminase type 2 subfamily. It depends on Zn(2+) as a cofactor.

It carries out the reaction adenine + H2O + H(+) = hypoxanthine + NH4(+). Catalyzes the hydrolytic deamination of adenine to hypoxanthine. Plays an important role in the purine salvage pathway and in nitrogen catabolism. The chain is Adenine deaminase from Rhizobium leguminosarum bv. trifolii (strain WSM2304).